A 178-amino-acid chain; its full sequence is ATP synthase subunit delta (178 aa).

It belongs to the ATPase delta chain family. In terms of assembly, F-type ATPases have 2 components, F(1) - the catalytic core - and F(0) - the membrane proton channel. F(1) has five subunits: alpha(3), beta(3), gamma(1), delta(1), epsilon(1). F(0) has three main subunits: a(1), b(2) and c(10-14). The alpha and beta chains form an alternating ring which encloses part of the gamma chain. F(1) is attached to F(0) by a central stalk formed by the gamma and epsilon chains, while a peripheral stalk is formed by the delta and b chains.

The protein resides in the cell inner membrane. Its function is as follows. F(1)F(0) ATP synthase produces ATP from ADP in the presence of a proton or sodium gradient. F-type ATPases consist of two structural domains, F(1) containing the extramembraneous catalytic core and F(0) containing the membrane proton channel, linked together by a central stalk and a peripheral stalk. During catalysis, ATP synthesis in the catalytic domain of F(1) is coupled via a rotary mechanism of the central stalk subunits to proton translocation. Functionally, this protein is part of the stalk that links CF(0) to CF(1). It either transmits conformational changes from CF(0) to CF(1) or is implicated in proton conduction. In Pelodictyon phaeoclathratiforme (strain DSM 5477 / BU-1), this protein is ATP synthase subunit delta.